Reading from the N-terminus, the 346-residue chain is Putative [LysW]-L-2-aminoadipate/[LysW]-L-glutamate phosphate reductase (346 aa).

Position 12–15 (12–15 (SGFT)) interacts with NADP(+). Cys-147 is a catalytic residue. Residue Asn-310 coordinates NADP(+).

Belongs to the NAGSA dehydrogenase family. Type 1 subfamily. LysY sub-subfamily.

It is found in the cytoplasm. The catalysed reaction is [amino-group carrier protein]-C-terminal-N-(1-carboxy-5-oxopentan-1-yl)-L-glutamine + phosphate + NADP(+) = [amino-group carrier protein]-C-terminal-N-(1-carboxy-5-phosphooxy-5-oxopentan-1-yl)-L-glutamine + NADPH + H(+). It catalyses the reaction [amino-group carrier protein]-C-terminal-gamma-(L-glutamyl-5-semialdehyde)-L-glutamate + phosphate + NADP(+) = [amino-group carrier protein]-C-terminal-gamma-(5-phospho-L-glutamyl)-L-glutamate + NADPH + H(+). The protein operates within amino-acid biosynthesis; L-lysine biosynthesis via AAA pathway; L-lysine from L-alpha-aminoadipate (Thermus route): step 3/5. Its pathway is amino-acid biosynthesis; L-arginine biosynthesis. Its function is as follows. Involved in both the arginine and lysine biosynthetic pathways. This Natronomonas pharaonis (strain ATCC 35678 / DSM 2160 / CIP 103997 / JCM 8858 / NBRC 14720 / NCIMB 2260 / Gabara) (Halobacterium pharaonis) protein is Putative [LysW]-L-2-aminoadipate/[LysW]-L-glutamate phosphate reductase.